We begin with the raw amino-acid sequence, 171 residues long: I (171 aa).

Disordered regions lie at residues 57 to 100 (IQYP…LFAQ) and 143 to 171 (PRTS…KRRA). Residues 151-162 (EFKRGGGRERLP) are compositionally biased toward basic and acidic residues.

The protein belongs to the Orthorubulavirus I protein family.

This chain is I, found in Mumps virus genotype N (strain L-Zagreb vaccine) (MuV).